A 240-amino-acid chain; its full sequence is Ribonuclease PH (240 aa).

Phosphate contacts are provided by residues Arg-87 and 125-127 (GTR).

It belongs to the RNase PH family. In terms of assembly, homohexameric ring arranged as a trimer of dimers.

The catalysed reaction is tRNA(n+1) + phosphate = tRNA(n) + a ribonucleoside 5'-diphosphate. Its function is as follows. Phosphorolytic 3'-5' exoribonuclease that plays an important role in tRNA 3'-end maturation. Removes nucleotide residues following the 3'-CCA terminus of tRNAs; can also add nucleotides to the ends of RNA molecules by using nucleoside diphosphates as substrates, but this may not be physiologically important. Probably plays a role in initiation of 16S rRNA degradation (leading to ribosome degradation) during starvation. This Ruminiclostridium cellulolyticum (strain ATCC 35319 / DSM 5812 / JCM 6584 / H10) (Clostridium cellulolyticum) protein is Ribonuclease PH.